The sequence spans 109 residues: Ferredoxin (109 aa).

4Fe-4S ferredoxin-type domains are found at residues 2–30 (TYVV…YEGE) and 31–60 (FMLV…PESP). [3Fe-4S] cluster-binding residues include Cys-9 and Cys-17. [4Fe-4S] cluster contacts are provided by Cys-21, Cys-40, Cys-43, and Cys-46. Cys-50 lines the [3Fe-4S] cluster pocket.

It depends on [4Fe-4S] cluster as a cofactor. The cofactor is [3Fe-4S] cluster.

In terms of biological role, ferredoxins are iron-sulfur proteins that transfer electrons in a wide variety of metabolic reactions. This is Ferredoxin (fdxA) from Rickettsia prowazekii (strain Madrid E).